Consider the following 656-residue polypeptide: Phosphoprotein 85 (656 aa).

Disordered regions lie at residues 1-174 (MSSR…EGDE) and 615-656 (NGNH…EYCC). Positions 46 to 55 (SATEDLDRME) are enriched in basic and acidic residues. Composition is skewed to low complexity over residues 59–70 (SPYSVSSDAPSS) and 140–160 (DNSSSGGSSSRTTSNSSRSTS). Residues 625 to 634 (SPPPPLPPRD) show a composition bias toward pro residues. Basic and acidic residues predominate over residues 635 to 656 (YPQRDERDRHRRDRRDSGEYCC).

The protein belongs to the herpesviridae pp85 family. In terms of processing, phosphorylated.

It localises to the virion tegument. The protein resides in the host cytoplasm. The chain is Phosphoprotein 85 (UL25) from Homo sapiens (Human).